Consider the following 387-residue polypeptide: Chorismate synthase (387 aa).

NADP(+) is bound by residues arginine 42 and arginine 48. Residues 131–133 (RSS), 251–252 (QA), glycine 295, 310–314 (KPIPT), and arginine 336 contribute to the FMN site.

Belongs to the chorismate synthase family. As to quaternary structure, homotetramer. FMNH2 is required as a cofactor.

It catalyses the reaction 5-O-(1-carboxyvinyl)-3-phosphoshikimate = chorismate + phosphate. It participates in metabolic intermediate biosynthesis; chorismate biosynthesis; chorismate from D-erythrose 4-phosphate and phosphoenolpyruvate: step 7/7. Its function is as follows. Catalyzes the anti-1,4-elimination of the C-3 phosphate and the C-6 proR hydrogen from 5-enolpyruvylshikimate-3-phosphate (EPSP) to yield chorismate, which is the branch point compound that serves as the starting substrate for the three terminal pathways of aromatic amino acid biosynthesis. This reaction introduces a second double bond into the aromatic ring system. This chain is Chorismate synthase, found in Syntrophotalea carbinolica (strain DSM 2380 / NBRC 103641 / GraBd1) (Pelobacter carbinolicus).